The sequence spans 1074 residues: Phospholipase D1 (1074 aa).

A PX domain is found at Ile-81–Ser-212. In terms of domain architecture, PH spans Pro-219 to Gln-328. Residues Cys-240 and Cys-241 are each lipidated (S-palmitoyl cysteine). One can recognise a PLD phosphodiesterase 1 domain in the interval Tyr-459–Arg-486. The tract at residues His-463–Ala-928 is catalytic. Phosphoserine occurs at positions 499, 561, and 629. Residues Glu-891–Ser-918 enclose the PLD phosphodiesterase 2 domain.

The protein belongs to the phospholipase D family. As to quaternary structure, interacts with PIP5K1B. Expressed abundantly in the pancreas and heart and at high levels in brain, placenta, spleen, uterus and small intestine.

Its subcellular location is the cytoplasm. It localises to the perinuclear region. It is found in the endoplasmic reticulum membrane. The protein resides in the golgi apparatus membrane. The protein localises to the late endosome membrane. It carries out the reaction a 1,2-diacyl-sn-glycero-3-phosphocholine + H2O = a 1,2-diacyl-sn-glycero-3-phosphate + choline + H(+). The catalysed reaction is ethanol + a 1,2-diacyl-sn-glycero-3-phosphocholine = 1,2-diacyl-sn-glycero-3-phosphoethanol + choline. The enzyme catalyses 1,2-dihexadecanoyl-sn-glycero-3-phosphocholine + H2O = 1,2-dihexadecanoyl-sn-glycero-3-phosphate + choline + H(+). Stimulated by phosphatidylinositol 4,5-bisphosphate and phosphatidylinositol 3,4,5-trisphosphate, activated by the phosphokinase C-alpha, by the ADP-ribosylation factor-1 (ARF-1), and to a lesser extent by GTP-binding proteins: RHO A, RAC-1 and CDC42. Inhibited by oleate. Function as phospholipase selective for phosphatidylcholine. Implicated as a critical step in numerous cellular pathways, including signal transduction, membrane trafficking, and the regulation of mitosis. May be involved in the regulation of perinuclear intravesicular membrane traffic. The sequence is that of Phospholipase D1 from Homo sapiens (Human).